We begin with the raw amino-acid sequence, 141 residues long: Flagellar assembly factor FliW (141 aa).

It belongs to the FliW family. In terms of assembly, interacts with translational regulator CsrA and flagellin(s).

The protein localises to the cytoplasm. In terms of biological role, acts as an anti-CsrA protein, binds CsrA and prevents it from repressing translation of its target genes, one of which is flagellin. Binds to flagellin and participates in the assembly of the flagellum. This is Flagellar assembly factor FliW from Clostridium acetobutylicum (strain ATCC 824 / DSM 792 / JCM 1419 / IAM 19013 / LMG 5710 / NBRC 13948 / NRRL B-527 / VKM B-1787 / 2291 / W).